Reading from the N-terminus, the 115-residue chain is Protein Diedel (115 aa).

Positions 1 to 24 (MASPVVSLLLVGICALAFVHVARS) are cleaved as a signal peptide. 5 cysteine pairs are disulfide-bonded: C26/C81, C27/C87, C42/C55, C60/C71, and C76/C83.

This sequence belongs to the Diedel family. In terms of tissue distribution, detected in hemolymph (at protein level). Also expressed in the fat body and is probably synthesized in the fat body and secreted into the hemolymph.

It is found in the secreted. Its function is as follows. Cytokine which promotes survival following infection by Sindbis virus by suppressing the immune deficiency pathway. Following infection by the enteropathogenic bacteria E.carotovora limits intestinal stem cells proliferation. When secreted from muscle or adipose tissue, can attenuate age-related intestinal tissue degeneration by inhibiting apoptosis. In Drosophila melanogaster (Fruit fly), this protein is Protein Diedel.